The primary structure comprises 356 residues: uncharacterized protein (356 aa).

An N-terminal signal peptide occupies residues 1-21 (MKLITAPCRALLALPFCYAFS).

This is an uncharacterized protein from Escherichia coli (strain K12).